The sequence spans 125 residues: Large ribosomal subunit protein bL19 (125 aa).

This sequence belongs to the bacterial ribosomal protein bL19 family.

This protein is located at the 30S-50S ribosomal subunit interface and may play a role in the structure and function of the aminoacyl-tRNA binding site. This Ehrlichia chaffeensis (strain ATCC CRL-10679 / Arkansas) protein is Large ribosomal subunit protein bL19.